Consider the following 1424-residue polypeptide: ABC multidrug transporter H (1424 aa).

The segment at 1-49 (MEDQGHLPSEPRALFDRRDDTDSTNTALDETDLSRTPLQDTSHTPHAED) is disordered. Over residues 23–42 (STNTALDETDLSRTPLQDTS) the composition is skewed to polar residues. N-linked (GlcNAc...) asparagine glycosylation is found at Asn79 and Asn275. The ABC transporter 1 domain occupies 96–351 (LSQFNIPQHI…MEEQGFVCRE (256 aa)). The next 7 membrane-spanning stretches (helical) occupy residues 488–508 (GLFI…LLAM), 520–540 (VLIK…IAQI), 544–564 (IPVL…MVGL), 569–589 (GAFF…TALF), 605–625 (VSGF…PYHA), 629–649 (WFIW…LLSI), and 710–730 (NFGI…IATS). Residues 760–782 (EEAQLNEKAGHKGTGTDSEAQSN) are disordered. Residues Asn790 and Asn798 are each glycosylated (N-linked (GlcNAc...) asparagine). The 244-residue stretch at 794-1037 (FTWKNLTYTV…VKDYFARYGA (244 aa)) folds into the ABC transporter 2 domain. Residue 830–837 (GSSGAGKT) coordinates ATP. The next 4 membrane-spanning stretches (helical) occupy residues 1131–1151 (IALH…IGDS), 1161–1181 (TIFN…PLFI), 1200–1220 (VAFV…CAVL), and 1240–1260 (AIFF…QFIA). N-linked (GlcNAc...) asparagine glycosylation is present at Asn1265. 2 helical membrane passes run 1268-1288 (FAAL…GVLV) and 1300-1320 (WIYW…FSVF). The N-linked (GlcNAc...) asparagine glycan is linked to Asn1338. The helical transmembrane segment at 1395 to 1415 (TAIVCIFVLSSYALVYALMKL) threads the bilayer.

This sequence belongs to the ABC transporter superfamily. ABCG family. PDR (TC 3.A.1.205) subfamily.

It is found in the cell membrane. With respect to regulation, the efflux inhibitor FK506 impairs the transport activity. Functionally, ABC efflux transporter that is able to transport rhodamine 6G (R-6G), a known substrate for many ABC transporters, but seems not to transport azoles. The sequence is that of ABC multidrug transporter H from Aspergillus fumigatus (strain ATCC MYA-4609 / CBS 101355 / FGSC A1100 / Af293) (Neosartorya fumigata).